Consider the following 89-residue polypeptide: Small ribosomal subunit protein uS15 (89 aa).

The protein belongs to the universal ribosomal protein uS15 family. As to quaternary structure, part of the 30S ribosomal subunit. Forms a bridge to the 50S subunit in the 70S ribosome, contacting the 23S rRNA.

One of the primary rRNA binding proteins, it binds directly to 16S rRNA where it helps nucleate assembly of the platform of the 30S subunit by binding and bridging several RNA helices of the 16S rRNA. Its function is as follows. Forms an intersubunit bridge (bridge B4) with the 23S rRNA of the 50S subunit in the ribosome. This Buchnera aphidicola subsp. Baizongia pistaciae (strain Bp) protein is Small ribosomal subunit protein uS15.